The following is a 150-amino-acid chain: Arginine repressor (150 aa).

This sequence belongs to the ArgR family.

Its subcellular location is the cytoplasm. Its pathway is amino-acid biosynthesis; L-arginine biosynthesis [regulation]. Regulates arginine biosynthesis genes. In Clostridium botulinum (strain Alaska E43 / Type E3), this protein is Arginine repressor.